Here is an 89-residue protein sequence, read N- to C-terminus: Small ribosomal subunit protein uS15 (89 aa).

The protein belongs to the universal ribosomal protein uS15 family. In terms of assembly, part of the 30S ribosomal subunit. Forms a bridge to the 50S subunit in the 70S ribosome, contacting the 23S rRNA.

Its function is as follows. One of the primary rRNA binding proteins, it binds directly to 16S rRNA where it helps nucleate assembly of the platform of the 30S subunit by binding and bridging several RNA helices of the 16S rRNA. Forms an intersubunit bridge (bridge B4) with the 23S rRNA of the 50S subunit in the ribosome. The chain is Small ribosomal subunit protein uS15 from Streptococcus equi subsp. zooepidemicus (strain H70).